The following is a 264-amino-acid chain: MRFKELVFLLKIDEEELLEKLYEEGFFNFAIEENKEGDRLLRVYLREGETLPSFLSNWKILDERLTTPKDWMVELEPFEIVEDVVVDPTEKVTRTDKIVVKLSPGVAFGTGLHPTTQMSVFFLKKYLKKGDRVVDVGCGTGILAIVAKKLGASYVMAVDVDEQAVEVAKENVQKNSVDVIVKRSDLLSEVDGVFDLVVSNILAEIHLRLLEDVDRITHERSILILSGIVDTKENMVREKASKKGWNLLERKQEREWVTLVMKRS.

4 residues coordinate S-adenosyl-L-methionine: threonine 116, glycine 137, aspartate 159, and asparagine 200.

This sequence belongs to the methyltransferase superfamily. PrmA family.

It is found in the cytoplasm. It carries out the reaction L-lysyl-[protein] + 3 S-adenosyl-L-methionine = N(6),N(6),N(6)-trimethyl-L-lysyl-[protein] + 3 S-adenosyl-L-homocysteine + 3 H(+). Functionally, methylates ribosomal protein L11. This Thermotoga neapolitana (strain ATCC 49049 / DSM 4359 / NBRC 107923 / NS-E) protein is Ribosomal protein L11 methyltransferase.